The primary structure comprises 879 residues: Phosphoenolpyruvate carboxylase (879 aa).

Residues H141 and K546 contribute to the active site.

It belongs to the PEPCase type 1 family. Requires Mg(2+) as cofactor.

The catalysed reaction is oxaloacetate + phosphate = phosphoenolpyruvate + hydrogencarbonate. In terms of biological role, forms oxaloacetate, a four-carbon dicarboxylic acid source for the tricarboxylic acid cycle. This is Phosphoenolpyruvate carboxylase from Stutzerimonas stutzeri (strain A1501) (Pseudomonas stutzeri).